Consider the following 176-residue polypeptide: Macro domain-containing protein lmo2759 (176 aa).

In terms of domain architecture, Macro spans 1–175 (MEITIVKGDI…LYNKLINSEV (175 aa)).

The protein belongs to the MacroD-type family.

This chain is Macro domain-containing protein lmo2759, found in Listeria monocytogenes serovar 1/2a (strain ATCC BAA-679 / EGD-e).